Reading from the N-terminus, the 346-residue chain is UDP-3-O-acylglucosamine N-acyltransferase (346 aa).

H240 (proton acceptor) is an active-site residue.

The protein belongs to the transferase hexapeptide repeat family. LpxD subfamily. As to quaternary structure, homotrimer.

The catalysed reaction is a UDP-3-O-[(3R)-3-hydroxyacyl]-alpha-D-glucosamine + a (3R)-hydroxyacyl-[ACP] = a UDP-2-N,3-O-bis[(3R)-3-hydroxyacyl]-alpha-D-glucosamine + holo-[ACP] + H(+). The protein operates within bacterial outer membrane biogenesis; LPS lipid A biosynthesis. In terms of biological role, catalyzes the N-acylation of UDP-3-O-acylglucosamine using 3-hydroxyacyl-ACP as the acyl donor. Is involved in the biosynthesis of lipid A, a phosphorylated glycolipid that anchors the lipopolysaccharide to the outer membrane of the cell. The sequence is that of UDP-3-O-acylglucosamine N-acyltransferase from Bacteroides thetaiotaomicron (strain ATCC 29148 / DSM 2079 / JCM 5827 / CCUG 10774 / NCTC 10582 / VPI-5482 / E50).